A 548-amino-acid polypeptide reads, in one-letter code: Chaperonin GroEL (548 aa).

ATP contacts are provided by residues 30 to 33 (TLGP), Lys-51, 87 to 91 (DGTTT), Gly-415, 479 to 481 (NAA), and Asp-495.

It belongs to the chaperonin (HSP60) family. As to quaternary structure, forms a cylinder of 14 subunits composed of two heptameric rings stacked back-to-back. Interacts with the co-chaperonin GroES.

It is found in the cytoplasm. It catalyses the reaction ATP + H2O + a folded polypeptide = ADP + phosphate + an unfolded polypeptide.. Functionally, together with its co-chaperonin GroES, plays an essential role in assisting protein folding. The GroEL-GroES system forms a nano-cage that allows encapsulation of the non-native substrate proteins and provides a physical environment optimized to promote and accelerate protein folding. This is Chaperonin GroEL from Proteus mirabilis (strain HI4320).